Consider the following 370-residue polypeptide: Queuine tRNA-ribosyltransferase (370 aa).

Aspartate 89 serves as the catalytic Proton acceptor. Substrate is bound by residues 89–93 (DSGGF), aspartate 143, glutamine 187, and glycine 214. Positions 245 to 251 (GVGKPED) are RNA binding. Residue aspartate 264 is the Nucleophile of the active site. Residues 269–273 (TRNAR) are RNA binding; important for wobble base 34 recognition. Zn(2+)-binding residues include cysteine 302, cysteine 304, cysteine 307, and histidine 333.

The protein belongs to the queuine tRNA-ribosyltransferase family. As to quaternary structure, homodimer. Within each dimer, one monomer is responsible for RNA recognition and catalysis, while the other monomer binds to the replacement base PreQ1. Zn(2+) is required as a cofactor.

It carries out the reaction 7-aminomethyl-7-carbaguanine + guanosine(34) in tRNA = 7-aminomethyl-7-carbaguanosine(34) in tRNA + guanine. It functions in the pathway tRNA modification; tRNA-queuosine biosynthesis. Its function is as follows. Catalyzes the base-exchange of a guanine (G) residue with the queuine precursor 7-aminomethyl-7-deazaguanine (PreQ1) at position 34 (anticodon wobble position) in tRNAs with GU(N) anticodons (tRNA-Asp, -Asn, -His and -Tyr). Catalysis occurs through a double-displacement mechanism. The nucleophile active site attacks the C1' of nucleotide 34 to detach the guanine base from the RNA, forming a covalent enzyme-RNA intermediate. The proton acceptor active site deprotonates the incoming PreQ1, allowing a nucleophilic attack on the C1' of the ribose to form the product. After dissociation, two additional enzymatic reactions on the tRNA convert PreQ1 to queuine (Q), resulting in the hypermodified nucleoside queuosine (7-(((4,5-cis-dihydroxy-2-cyclopenten-1-yl)amino)methyl)-7-deazaguanosine). This Baumannia cicadellinicola subsp. Homalodisca coagulata protein is Queuine tRNA-ribosyltransferase.